A 111-amino-acid polypeptide reads, in one-letter code: Repressed By RIM101 protein 1 (111 aa).

The first 19 residues, 1–19 (MKFSTTLLALTASIAAVMS), serve as a signal peptide directing secretion. The interval 71–90 (SGASSATGGSSAAKSGSSSG) is disordered. Serine 81 carries GPI-anchor amidated serine lipidation. The propeptide at 82 to 111 (AAKSGSSSGAGFAPVAGAGSLAAIAGLLLL) is removed in mature form.

Post-translationally, the GPI-anchor is attached to the protein in the endoplasmic reticulum and serves to target the protein to the cell surface. There, the glucosamine-inositol phospholipid moiety is cleaved off and the GPI-modified mannoprotein is covalently attached via its lipidless GPI glycan remnant to the 1,6-beta-glucan of the outer cell wall layer.

It localises to the secreted. The protein resides in the cell wall. It is found in the membrane. Probable cell wall protein required for filamentation at low pH. In Candida albicans (strain SC5314 / ATCC MYA-2876) (Yeast), this protein is Repressed By RIM101 protein 1 (RBR1).